The sequence spans 399 residues: Tyrosine--tRNA ligase (399 aa).

Positions 42–51 match the 'HIGH' region motif; the sequence is PTAPDLHLGH. The 'KMSKS' region signature appears at 226–230; it reads KMSKS. Residue K229 participates in ATP binding. The S4 RNA-binding domain occupies 336-396; that stretch reads MPIAAVLNKA…GRKAFARITL (61 aa).

This sequence belongs to the class-I aminoacyl-tRNA synthetase family. TyrS type 2 subfamily. In terms of assembly, homodimer.

The protein localises to the cytoplasm. The catalysed reaction is tRNA(Tyr) + L-tyrosine + ATP = L-tyrosyl-tRNA(Tyr) + AMP + diphosphate + H(+). Functionally, catalyzes the attachment of tyrosine to tRNA(Tyr) in a two-step reaction: tyrosine is first activated by ATP to form Tyr-AMP and then transferred to the acceptor end of tRNA(Tyr). This is Tyrosine--tRNA ligase from Pseudomonas fluorescens (strain ATCC BAA-477 / NRRL B-23932 / Pf-5).